The primary structure comprises 180 residues: ATP synthase subunit delta (180 aa).

The protein belongs to the ATPase delta chain family. F-type ATPases have 2 components, F(1) - the catalytic core - and F(0) - the membrane proton channel. F(1) has five subunits: alpha(3), beta(3), gamma(1), delta(1), epsilon(1). F(0) has three main subunits: a(1), b(2) and c(10-14). The alpha and beta chains form an alternating ring which encloses part of the gamma chain. F(1) is attached to F(0) by a central stalk formed by the gamma and epsilon chains, while a peripheral stalk is formed by the delta and b chains.

It localises to the cell membrane. Its function is as follows. F(1)F(0) ATP synthase produces ATP from ADP in the presence of a proton or sodium gradient. F-type ATPases consist of two structural domains, F(1) containing the extramembraneous catalytic core and F(0) containing the membrane proton channel, linked together by a central stalk and a peripheral stalk. During catalysis, ATP synthesis in the catalytic domain of F(1) is coupled via a rotary mechanism of the central stalk subunits to proton translocation. Functionally, this protein is part of the stalk that links CF(0) to CF(1). It either transmits conformational changes from CF(0) to CF(1) or is implicated in proton conduction. This Bacillus cereus (strain B4264) protein is ATP synthase subunit delta.